The chain runs to 481 residues: Squalene epoxidase erg1 (481 aa).

Residues 28–48 (HADVVIIGAGVLGCALAVALG) traverse the membrane as a helical segment. Residues 38–39 (VL), 58–59 (EA), Arg66, and Arg138 contribute to the FAD site. Asn146 is a glycosylation site (N-linked (GlcNAc...) asparagine). Positions 319 and 332 each coordinate FAD. 2 consecutive transmembrane segments (helical) span residues 425–445 (KPSV…WVLL) and 452–472 (LFPV…VVIF).

Belongs to the squalene monooxygenase family. FAD is required as a cofactor.

The protein resides in the endoplasmic reticulum membrane. The protein localises to the microsome membrane. It catalyses the reaction squalene + reduced [NADPH--hemoprotein reductase] + O2 = (S)-2,3-epoxysqualene + oxidized [NADPH--hemoprotein reductase] + H2O + H(+). It functions in the pathway steroid metabolism; ergosterol biosynthesis. In terms of biological role, squalene epoxidase; part of the third module of ergosterol biosynthesis pathway that includes the late steps of the pathway. Erg1 catalyzes the epoxidation of squalene into 2,3-epoxysqualene. The third module or late pathway involves the ergosterol synthesis itself through consecutive reactions that mainly occur in the endoplasmic reticulum (ER) membrane. Firstly, the squalene synthase erg9 catalyzes the condensation of 2 farnesyl pyrophosphate moieties to form squalene, which is the precursor of all steroids. Squalene synthase is crucial for balancing the incorporation of farnesyl diphosphate (FPP) into sterol and nonsterol isoprene synthesis. Secondly, squalene is converted into lanosterol by the consecutive action of the squalene epoxidase erg1 and the lanosterol synthase erg7. Then, the delta(24)-sterol C-methyltransferase erg6 methylates lanosterol at C-24 to produce eburicol. Eburicol is the substrate of the sterol 14-alpha demethylase encoded by cyp51A and cyp51B, to yield 4,4,24-trimethyl ergosta-8,14,24(28)-trienol. The C-14 reductase erg24 then reduces the C14=C15 double bond which leads to 4,4-dimethylfecosterol. A sequence of further demethylations at C-4, involving the C-4 demethylation complex containing the C-4 methylsterol oxidases erg25A or erg25B, the sterol-4-alpha-carboxylate 3-dehydrogenase erg26 and the 3-keto-steroid reductase erg27, leads to the production of fecosterol via 4-methylfecosterol. The C-8 sterol isomerase erg2 then catalyzes the reaction which results in unsaturation at C-7 in the B ring of sterols and thus converts fecosterol to episterol. The sterol-C5-desaturase erg3B then catalyzes the introduction of a C-5 double bond in the B ring to produce 5-dehydroepisterol. The 2 other sterol-C5-desaturases, erg3A and erg3C, seem to be less important in ergosterol biosynthesis. The C-22 sterol desaturase erg5 further converts 5-dehydroepisterol into ergosta-5,7,22,24(28)-tetraen-3beta-ol by forming the C-22(23) double bond in the sterol side chain. Finally, ergosta-5,7,22,24(28)-tetraen-3beta-ol is substrate of the C-24(28) sterol reductases erg4A and erg4B to produce ergosterol. Possible alternative sterol biosynthetic pathways might exist from fecosterol to ergosterol, depending on the activities of the erg3 isoforms. The polypeptide is Squalene epoxidase erg1 (Aspergillus fumigatus (strain ATCC MYA-4609 / CBS 101355 / FGSC A1100 / Af293) (Neosartorya fumigata)).